The sequence spans 158 residues: FUN14 domain-containing protein 1 (158 aa).

Residues 21–24 (YEVV) carry the YXXL motif. 2 helical membrane-spanning segments follow: residues 51–70 (YSVT…AGYL) and 77–98 (IAAT…SGYV).

It belongs to the FUN14 family.

The protein resides in the mitochondrion outer membrane. Its function is as follows. Acts as an activator of hypoxia-induced mitophagy, an important mechanism for mitochondrial quality control. The sequence is that of FUN14 domain-containing protein 1 (fundc1) from Tetraodon nigroviridis (Spotted green pufferfish).